Consider the following 87-residue polypeptide: Putative defensin-like protein 235 (87 aa).

The signal sequence occupies residues 1–26 (MRSATFFLVSCVLMSFVLSHVKEVEA). 3 disulfides stabilise this stretch: Cys-46/Cys-73, Cys-54/Cys-82, and Cys-71/Cys-84.

This sequence belongs to the DEFL family.

The protein localises to the secreted. The protein is Putative defensin-like protein 235 (SCRL26) of Arabidopsis thaliana (Mouse-ear cress).